The chain runs to 84 residues: UPF0386 protein R01313 (84 aa).

It belongs to the UPF0386 family.

The sequence is that of UPF0386 protein R01313 from Rhizobium meliloti (strain 1021) (Ensifer meliloti).